A 450-amino-acid polypeptide reads, in one-letter code: Na(+)/H(+) antiporter NhaA 2 (450 aa).

12 consecutive transmembrane segments (helical) span residues 43–63, 86–106, 124–144, 155–175, 185–205, 208–228, 234–254, 258–278, 299–319, 326–346, 364–384, and 398–418; these read VGGA…NSPW, LTLG…VVGL, ALPM…FVAV, GWAI…AVIS, FLLT…AVFY, EINL…ALCV, SWWL…ESGV, VAGV…AGGP, VAVP…VSGL, PITL…IFLT, WIDV…SLLI, and FVKV…AVLL.

This sequence belongs to the NhaA Na(+)/H(+) (TC 2.A.33) antiporter family.

The protein localises to the cell membrane. The enzyme catalyses Na(+)(in) + 2 H(+)(out) = Na(+)(out) + 2 H(+)(in). Its function is as follows. Na(+)/H(+) antiporter that extrudes sodium in exchange for external protons. The polypeptide is Na(+)/H(+) antiporter NhaA 2 (Mycobacterium sp. (strain KMS)).